Here is a 327-residue protein sequence, read N- to C-terminus: Protein MRG2 (327 aa).

Residues Met-1–Leu-40 are disordered. The region spanning Phe-52 to Asp-101 is the Tudor-knot domain. The interval Ser-133 to Glu-156 is disordered. Residues Ser-162 to Gly-327 form the MRG domain.

Interacts with HAM1 and HAM2. Interacts (via MRG domain) with CO. Component of the NuA4 histone acetyltransferase complex. Ubiquitous. Mainly expressed in the vasculature of cotyledons and leaves, and in roots and inflorescences.

The protein resides in the nucleus. Chromatin remodeling factor. Acts as a 'reader' protein by binding to H3K4me3 and H3K36me3 to control histone H4 acetylation. Increases the transcriptional levels of the flowering time genes FLC and FT. Binds the chromatin at the FT promoter upon interaction with CO. In Arabidopsis thaliana (Mouse-ear cress), this protein is Protein MRG2.